A 135-amino-acid chain; its full sequence is C-type natriuretic peptide (135 aa).

Positions 1–25 (MSGHTSFYCGLLLLLLIQVQARPRA) are cleaved as a signal peptide. Positions 26–113 (DDSLQVLSRL…PLRFKGRSKK (88 aa)) are excised as a propeptide. The interval 46-67 (EELNNEAQEISPAASLPDLNTD) is disordered. Cysteines 119 and 135 form a disulfide.

It belongs to the natriuretic peptide family.

It is found in the secreted. In terms of biological role, hormone which may be vasoactive and natriuretic. Has a cGMP-stimulating activity. The chain is C-type natriuretic peptide from Squalus acanthias (Spiny dogfish).